The sequence spans 854 residues: Lysine-specific demethylase 3 (854 aa).

The disordered stretch occupies residues 64 to 88 (QRVQQEEESLGQVPPLTEEEQQRHD). Positions 601 to 806 (LRTGNLNIAS…HCYHLTHEFR (206 aa)) constitute a JmjC domain. Residues H643, D645, and H774 each coordinate Fe cation.

Belongs to the JHDM2-like histone demethylase family. Requires Fe(2+) as cofactor. In terms of tissue distribution, expressed in neurons close to the dorsal lateral neurons involved in circadian rhythm.

It localises to the nucleus. It is found in the cytoplasm. It carries out the reaction N(6),N(6)-dimethyl-L-lysyl(9)-[histone H3] + 2 2-oxoglutarate + 2 O2 = L-lysyl(9)-[histone H3] + 2 formaldehyde + 2 succinate + 2 CO2. Functionally, histone demethylase that specifically demethylates 'Lys-10' of histone H3 (H3K9), thereby playing a central role in histone code. Demethylation of Lys residue generates formaldehyde and succinate. Probably involved in regulation of chromatin structure, promoting expansion of euchromatin. Negatively regulates rhino-dependent piRNA production capacity of several genomic regions; may help define the frontiers of piRNA clusters by regulating histone methylation levels. May be involved in regulation of behavior and circadian rhythms. In Drosophila melanogaster (Fruit fly), this protein is Lysine-specific demethylase 3.